The following is a 358-amino-acid chain: MSAKTILSSVVLVVLVAASAAANIGFDESNPIRMVSDGLREVEESVSQILGQSRHVLSFARFTHRYGKKYQNVEEMKLRFSIFKENLDLIRSTNKKGLSYKLGVNQFADLTWQEFQRTKLGAAQNCSATLKGSHKVTEAALPETKDWREDGIVSPVKDQGGCGSCWTFSTTGALEAAYHQAFGKGISLSEQQLVDCAGAFNNYGCNGGLPSQAFEYIKSNGGLDTEKAYPYTGKDETCKFSAENVGVQVLNSVNITLGAEDELKHAVGLVRPVSIAFEVIHSFRLYKSGVYTDSHCGSTPMDVNHAVLAVGYGVEDGVPYWLIKNSWGADWGDKGYFKMEMGKNMCGIATCASYPVVA.

The N-terminal stretch at 1–21 is a signal peptide; that stretch reads MSAKTILSSVVLVVLVAASAA. Residues 22–42 form an interaction with VSR1 region; sequence ANIGFDESNPIRMVSDGLREV. The propeptide at 22-140 is activation peptide; sequence ANIGFDESNP…KGSHKVTEAA (119 aa). A glycan (N-linked (GlcNAc...) asparagine) is linked at Asn-125. Cystine bridges form between Cys-162–Cys-205 and Cys-196–Cys-238. The active site involves Cys-165. A glycan (N-linked (GlcNAc...) asparagine) is linked at Asn-254. Cys-296 and Cys-346 are joined by a disulfide. Residues His-305 and Asn-325 contribute to the active site.

It belongs to the peptidase C1 family. Interacts with VSR1/BP80B. In terms of tissue distribution, expressed in leaves (at protein level).

Its subcellular location is the vacuole. It carries out the reaction Hydrolysis of proteins, acting as an aminopeptidase (notably, cleaving Arg-|-Xaa bonds) as well as an endopeptidase.. Its function is as follows. May play a role in proteolysis leading to mobilization of nitrogen during senescence and starvation. This is Thiol protease aleurain from Arabidopsis thaliana (Mouse-ear cress).